Reading from the N-terminus, the 513-residue chain is ATP synthase subunit alpha (513 aa).

Residue 169–176 (GDRQTGKT) participates in ATP binding.

The protein belongs to the ATPase alpha/beta chains family. F-type ATPases have 2 components, CF(1) - the catalytic core - and CF(0) - the membrane proton channel. CF(1) has five subunits: alpha(3), beta(3), gamma(1), delta(1), epsilon(1). CF(0) has three main subunits: a(1), b(2) and c(9-12). The alpha and beta chains form an alternating ring which encloses part of the gamma chain. CF(1) is attached to CF(0) by a central stalk formed by the gamma and epsilon chains, while a peripheral stalk is formed by the delta and b chains.

It is found in the cell inner membrane. The enzyme catalyses ATP + H2O + 4 H(+)(in) = ADP + phosphate + 5 H(+)(out). Produces ATP from ADP in the presence of a proton gradient across the membrane. The alpha chain is a regulatory subunit. This is ATP synthase subunit alpha from Mannheimia succiniciproducens (strain KCTC 0769BP / MBEL55E).